Consider the following 458-residue polypeptide: MAGSPSRAAGRRLQLPLLCLFLQGATAVLFAVFVRYNHKTDAALWHRGNYSNADNEFYFRYPSFQDVHAMVFVGFGFLMVFLQRYGFSSVGFTFLLAAFALQWSTLVQGFLHSFHSGHIHVGVESMINADFCAGAVLISFGAVLGKTGPAQLLLMALLEVVLFGINEFVLLHLLGVRDAGGSMTIHTFGAYFGLVLSRVLYRPQLEKSKHRQGSVYHSDLFAMIGTIFLWIFWPSFNSALTALGAGQHRTALNTYYSLAASTLGTFALSALVGEDGRLDMVHIQNAALAGGVVVGTSSEMMLTPFGALAAGFLAGTVSTLGYKFFTPILESKFKVQDTCGVHNLHGMPGVLGALLGVLVAGLATHEAYGDGLESVFPLIAEGQRSATSQAMLQLFGLFVTLMFASVGGGLGGLLLKLPFLDSPPDSQCYEDQVHWQVPGEHEDEAQRPLRVEEADTQA.

At 1–13 (MAGSPSRAAGRRL) the chain is on the cytoplasmic side. The helical transmembrane segment at 14-34 (QLPLLCLFLQGATAVLFAVFV) threads the bilayer. Over 35 to 61 (RYNHKTDAALWHRGNYSNADNEFYFRY) the chain is Extracellular. N-linked (GlcNAc...) asparagine glycosylation is present at asparagine 49. Residues 62-82 (PSFQDVHAMVFVGFGFLMVFL) form a helical membrane-spanning segment. The Cytoplasmic portion of the chain corresponds to 83-86 (QRYG). A helical transmembrane segment spans residues 87-107 (FSSVGFTFLLAAFALQWSTLV). Over 108-124 (QGFLHSFHSGHIHVGVE) the chain is Extracellular. The chain crosses the membrane as a helical span at residues 125-145 (SMINADFCAGAVLISFGAVLG). The Cytoplasmic segment spans residues 146 to 149 (KTGP). A helical transmembrane segment spans residues 150–170 (AQLLLMALLEVVLFGINEFVL). The Extracellular segment spans residues 171–178 (LHLLGVRD). Residues 179-201 (AGGSMTIHTFGAYFGLVLSRVLY) form a helical membrane-spanning segment. Topologically, residues 202-219 (RPQLEKSKHRQGSVYHSD) are cytoplasmic. A helical membrane pass occupies residues 220-240 (LFAMIGTIFLWIFWPSFNSAL). The Extracellular portion of the chain corresponds to 241–251 (TALGAGQHRTA). A helical transmembrane segment spans residues 252–272 (LNTYYSLAASTLGTFALSALV). Over 273 to 282 (GEDGRLDMVH) the chain is Cytoplasmic. A helical membrane pass occupies residues 283-303 (IQNAALAGGVVVGTSSEMMLT). Position 304 (proline 304) is a topological domain, extracellular. The chain crosses the membrane as a helical span at residues 305 to 325 (FGALAAGFLAGTVSTLGYKFF). Over 326-346 (TPILESKFKVQDTCGVHNLHG) the chain is Cytoplasmic. The helical transmembrane segment at 347 to 367 (MPGVLGALLGVLVAGLATHEA) threads the bilayer. Topologically, residues 368-393 (YGDGLESVFPLIAEGQRSATSQAMLQ) are extracellular. Residues 394–414 (LFGLFVTLMFASVGGGLGGLL) traverse the membrane as a helical segment. The Cytoplasmic segment spans residues 415 to 458 (LKLPFLDSPPDSQCYEDQVHWQVPGEHEDEAQRPLRVEEADTQA). The segment at 416 to 424 (KLPFLDSPP) is interaction with ANK3. Positions 429 to 432 (YEDQ) match the Basolateral sorting signal motif. A disordered region spans residues 439-458 (GEHEDEAQRPLRVEEADTQA). Basic and acidic residues predominate over residues 444-458 (EAQRPLRVEEADTQA).

Belongs to the ammonium transporter (TC 2.A.49) family. Rh subfamily. Interacts (via C-terminus) with ANK2 and ANK3; required for targeting to the basolateral membrane. N-glycosylated.

The protein resides in the cell membrane. It localises to the basolateral cell membrane. The catalysed reaction is NH4(+)(in) = NH4(+)(out). It catalyses the reaction methylamine(out) = methylamine(in). The enzyme catalyses CO2(out) = CO2(in). Functionally, ammonium transporter involved in the maintenance of acid-base homeostasis. Transports ammonium and its related derivative methylammonium across the basolateral plasma membrane of epithelial cells likely contributing to renal transepithelial ammonia transport and ammonia metabolism. May transport either NH4(+) or NH3 ammonia species predominantly mediating an electrogenic NH4(+) transport. May act as a CO2 channel providing for renal acid secretion. The chain is Ammonium transporter Rh type B (RHBG) from Papio hamadryas (Hamadryas baboon).